The sequence spans 205 residues: Proteasome subunit beta type-3 (205 aa).

Ser-2 bears the N-acetylserine mark. Lys-77 carries the N6-acetyllysine modification.

Belongs to the peptidase T1B family. The 26S proteasome consists of a 20S proteasome core and two 19S regulatory subunits. The 20S proteasome core is a barrel-shaped complex made of 28 subunits that are arranged in four stacked rings. The two outer rings are each formed by seven alpha subunits, and the two inner rings are formed by seven beta subunits. The proteolytic activity is exerted by three beta-subunits PSMB5, PSMB6 and PSMB7.

The protein resides in the cytoplasm. It is found in the nucleus. Functionally, non-catalytic component of the 20S core proteasome complex involved in the proteolytic degradation of most intracellular proteins. This complex plays numerous essential roles within the cell by associating with different regulatory particles. Associated with two 19S regulatory particles, forms the 26S proteasome and thus participates in the ATP-dependent degradation of ubiquitinated proteins. The 26S proteasome plays a key role in the maintenance of protein homeostasis by removing misfolded or damaged proteins that could impair cellular functions, and by removing proteins whose functions are no longer required. Associated with the PA200 or PA28, the 20S proteasome mediates ubiquitin-independent protein degradation. This type of proteolysis is required in several pathways including spermatogenesis (20S-PA200 complex) or generation of a subset of MHC class I-presented antigenic peptides (20S-PA28 complex). The protein is Proteasome subunit beta type-3 (Psmb3) of Rattus norvegicus (Rat).